The chain runs to 346 residues: SUMO-activating enzyme subunit 1 (346 aa).

The residue at position 1 (M1) is an N-acetylmethionine. N-acetylvaline; in SUMO-activating enzyme subunit 1, N-terminally processed is present on V2. Residue S12 is modified to Phosphoserine. K198 bears the N6-acetyllysine mark.

This sequence belongs to the ubiquitin-activating E1 family. In terms of assembly, heterodimer of SAE1 and UBA2/SAE2. The heterodimer corresponds to the two domains that are encoded on a single polypeptide chain in ubiquitin-activating enzyme E1. Interacts with UBE2I. As to expression, expression level increases during S phase and drops in G2 phase (at protein level).

It is found in the nucleus. Its pathway is protein modification; protein sumoylation. The heterodimer acts as an E1 ligase for SUMO1, SUMO2, SUMO3, and probably SUMO4. It mediates ATP-dependent activation of SUMO proteins followed by formation of a thioester bond between a SUMO protein and a conserved active site cysteine residue on UBA2/SAE2. The polypeptide is SUMO-activating enzyme subunit 1 (SAE1) (Homo sapiens (Human)).